The sequence spans 557 residues: Formate--tetrahydrofolate ligase (557 aa).

Residue 65–72 (TPAGEGKT) coordinates ATP.

Belongs to the formate--tetrahydrofolate ligase family.

The catalysed reaction is (6S)-5,6,7,8-tetrahydrofolate + formate + ATP = (6R)-10-formyltetrahydrofolate + ADP + phosphate. It participates in one-carbon metabolism; tetrahydrofolate interconversion. This Methylococcus capsulatus (strain ATCC 33009 / NCIMB 11132 / Bath) protein is Formate--tetrahydrofolate ligase.